Here is a 271-residue protein sequence, read N- to C-terminus: MKI67 FHA domain-interacting nucleolar phosphoprotein (271 aa).

Residues 1–20 (MAEYSGPAKPTLALNPREDS) are disordered. Alanine 2 is subject to N-acetylalanine. A Glycyl lysine isopeptide (Lys-Gly) (interchain with G-Cter in SUMO2) cross-link involves residue lysine 37. The RRM domain occupies 44–122 (GVVYLGHLPS…RLLSCKFMPR (79 aa)). The residue at position 113 (arginine 113) is an Omega-N-methylarginine. Residues lysine 178 and lysine 191 each participate in a glycyl lysine isopeptide (Lys-Gly) (interchain with G-Cter in SUMO2) cross-link. 2 positions are modified to phosphothreonine: threonine 213 and threonine 217. Residues arginine 223 and arginine 224 each carry the omega-N-methylated arginine modification. Serine 226 is subject to Phosphoserine. Positions 242 to 271 (PVSPVKEDTQKTPAPESSGKKRLRKRKSKQ) are disordered. Residue lysine 247 forms a Glycyl lysine isopeptide (Lys-Gly) (interchain with G-Cter in SUMO1); alternate linkage. Residue lysine 247 forms a Glycyl lysine isopeptide (Lys-Gly) (interchain with G-Cter in SUMO2); alternate linkage. Over residues 261–271 (KKRLRKRKSKQ) the composition is skewed to basic residues.

In terms of assembly, binds to the FHA domain of MKI67; this interaction is enhanced in mitosis. Post-translationally, phosphorylated.

The protein localises to the nucleus. It localises to the nucleolus. It is found in the chromosome. In Rattus norvegicus (Rat), this protein is MKI67 FHA domain-interacting nucleolar phosphoprotein (Nifk).